The chain runs to 508 residues: Photosystem II CP47 reaction center protein (508 aa).

6 helical membrane-spanning segments follow: residues 21–36, 101–115, 140–156, 203–218, 237–252, and 457–472; these read SVHI…WAGS, IVFS…IWHW, GIHL…FGAF, IAAG…FHLS, VLSS…AFVV, and SFAL…HGAR.

Belongs to the PsbB/PsbC family. PsbB subfamily. As to quaternary structure, PSII is composed of 1 copy each of membrane proteins PsbA, PsbB, PsbC, PsbD, PsbE, PsbF, PsbH, PsbI, PsbJ, PsbK, PsbL, PsbM, PsbT, PsbX, PsbY, PsbZ, Psb30/Ycf12, at least 3 peripheral proteins of the oxygen-evolving complex and a large number of cofactors. It forms dimeric complexes. The cofactor is Binds multiple chlorophylls. PSII binds additional chlorophylls, carotenoids and specific lipids..

The protein localises to the plastid. It localises to the chloroplast thylakoid membrane. One of the components of the core complex of photosystem II (PSII). It binds chlorophyll and helps catalyze the primary light-induced photochemical processes of PSII. PSII is a light-driven water:plastoquinone oxidoreductase, using light energy to abstract electrons from H(2)O, generating O(2) and a proton gradient subsequently used for ATP formation. This chain is Photosystem II CP47 reaction center protein, found in Nasturtium officinale (Watercress).